Reading from the N-terminus, the 177-residue chain is Large ribosomal subunit protein uL6 (177 aa).

Belongs to the universal ribosomal protein uL6 family. Part of the 50S ribosomal subunit.

Functionally, this protein binds to the 23S rRNA, and is important in its secondary structure. It is located near the subunit interface in the base of the L7/L12 stalk, and near the tRNA binding site of the peptidyltransferase center. The polypeptide is Large ribosomal subunit protein uL6 (Bordetella bronchiseptica (strain ATCC BAA-588 / NCTC 13252 / RB50) (Alcaligenes bronchisepticus)).